Here is a 222-residue protein sequence, read N- to C-terminus: RNA chaperone ProQ (222 aa).

A compositionally biased stretch (basic and acidic residues) spans 94-113; the sequence is EHADHAKQQLDESKAKAAEK. The tract at residues 94 to 171 is disordered; it reads EHADHAKQQL…PAKLTDSDLQ (78 aa). Basic residues predominate over residues 114 to 131; that stretch reads RKAKLAQQPKRKDKRQFN. The segment covering 133–148 has biased composition (basic and acidic residues); sequence PKGEKSANSDHADTKR. A compositionally biased stretch (low complexity) spans 155–164; that stretch reads NRPNTTPPAK.

It belongs to the ProQ family.

It localises to the cytoplasm. RNA chaperone with significant RNA binding, RNA strand exchange and RNA duplexing activities. The sequence is that of RNA chaperone ProQ from Alteromonas mediterranea (strain DSM 17117 / CIP 110805 / LMG 28347 / Deep ecotype).